Here is a 31-residue protein sequence, read N- to C-terminus: GFNPCGETCIWFPTCHAPGCTCSIANICVRN.

The cyclopeptide (Gly-Asn) cross-link spans 1–31; it reads GFNPCGETCIWFPTCHAPGCTCSIANICVRN. Intrachain disulfides connect Cys5/Cys20, Cys9/Cys22, and Cys15/Cys28.

This is a cyclic peptide.

Probably participates in a plant defense mechanism. The polypeptide is Cyclotide psybry A (Psychotria brachyceras).